We begin with the raw amino-acid sequence, 378 residues long: Erythronate-4-phosphate dehydrogenase (378 aa).

The substrate site is built by S45 and T66. NAD(+) is bound by residues D146 and T175. R208 is a catalytic residue. Residue D232 participates in NAD(+) binding. E237 is a catalytic residue. Catalysis depends on H254, which acts as the Proton donor. G257 provides a ligand contact to NAD(+). Residue Y258 coordinates substrate.

It belongs to the D-isomer specific 2-hydroxyacid dehydrogenase family. PdxB subfamily. Homodimer.

It is found in the cytoplasm. It carries out the reaction 4-phospho-D-erythronate + NAD(+) = (R)-3-hydroxy-2-oxo-4-phosphooxybutanoate + NADH + H(+). Its pathway is cofactor biosynthesis; pyridoxine 5'-phosphate biosynthesis; pyridoxine 5'-phosphate from D-erythrose 4-phosphate: step 2/5. Catalyzes the oxidation of erythronate-4-phosphate to 3-hydroxy-2-oxo-4-phosphonooxybutanoate. This chain is Erythronate-4-phosphate dehydrogenase, found in Klebsiella pneumoniae (strain 342).